We begin with the raw amino-acid sequence, 307 residues long: Cysteine synthase (307 aa).

K42 carries the N6-(pyridoxal phosphate)lysine modification. Pyridoxal 5'-phosphate contacts are provided by residues N72, 176–180 (GTGGH), and S263.

Belongs to the cysteine synthase/cystathionine beta-synthase family. The cofactor is pyridoxal 5'-phosphate.

It carries out the reaction O-acetyl-L-serine + hydrogen sulfide = L-cysteine + acetate. It participates in amino-acid biosynthesis; L-cysteine biosynthesis; L-cysteine from L-serine: step 2/2. This Flavobacterium sp. (strain K3-15 / DSM ID92-509) protein is Cysteine synthase (cysK).